The chain runs to 2136 residues: Protein Ycf2 (2136 aa).

Residue Gly1404–Ser1411 coordinates ATP.

This sequence belongs to the Ycf2 family.

Its subcellular location is the plastid. The protein localises to the chloroplast stroma. In terms of biological role, probable ATPase of unknown function. Its presence in a non-photosynthetic plant (Epifagus virginiana) and experiments in tobacco indicate that it has an essential function which is probably not related to photosynthesis. This chain is Protein Ycf2, found in Marchantia polymorpha (Common liverwort).